Reading from the N-terminus, the 79-residue chain is Sulfur carrier protein TusA (79 aa).

The Cysteine persulfide intermediate role is filled by Cys-17.

This sequence belongs to the sulfur carrier protein TusA family.

It localises to the cytoplasm. Functionally, sulfur carrier protein which probably makes part of a sulfur-relay system. The sequence is that of Sulfur carrier protein TusA from Histophilus somni (strain 129Pt) (Haemophilus somnus).